Here is a 153-residue protein sequence, read N- to C-terminus: Transcription antitermination protein NusB (153 aa).

The protein belongs to the NusB family.

Its function is as follows. Involved in transcription antitermination. Required for transcription of ribosomal RNA (rRNA) genes. Binds specifically to the boxA antiterminator sequence of the ribosomal RNA (rrn) operons. The protein is Transcription antitermination protein NusB of Nitratidesulfovibrio vulgaris (strain ATCC 29579 / DSM 644 / CCUG 34227 / NCIMB 8303 / VKM B-1760 / Hildenborough) (Desulfovibrio vulgaris).